The sequence spans 876 residues: GRB2-associated and regulator of MAPK protein 1 (876 aa).

The CABIT stretch occupies residues lysine 12 to glutamate 320. 2 positions are modified to phosphotyrosine: tyrosine 105 and tyrosine 453. The tract at residues isoleucine 496–serine 572 is disordered. A necessary for interaction with GRB2 region spans residues glycine 498–proline 550. Over residues arginine 558–serine 572 the composition is skewed to polar residues. Residues serine 610 and serine 614 each carry the phosphoserine modification. Disordered stretches follow at residues tryptophan 626–asparagine 664 and alanine 738–serine 763. Polar residues-rich tracts occupy residues serine 631–serine 640 and arginine 648–proline 658. The region spanning leucine 811–isoleucine 876 is the SAM domain.

The protein belongs to the GAREM family. As to quaternary structure, isoform 1 interacts with EGFR. Isoform 1 interacts (via proline-rich domain and phosphorylated at Tyr-105 and Tyr-453) with GRB2 (via SH3 domains); the interaction occurs upon EGF stimulation. Isoform 1 interacts (phosphorylated at Tyr-453) with PTPN11; the interaction increases MAPK/ERK activity and does not affect the GRB2/SOS complex formation. Isoform 2 does not interact with GRB2. Post-translationally, on EGF stimulation, phosphorylated on Tyr-105 and Tyr-453. As to expression, isoform 1 is ubiquitously expressed.

Its function is as follows. Acts as an adapter protein that plays a role in intracellular signaling cascades triggered either by the cell surface activated epidermal growth factor receptor and/or cytoplasmic protein tyrosine kinases. Promotes activation of the MAPK/ERK signaling pathway. Plays a role in the regulation of cell proliferation. The sequence is that of GRB2-associated and regulator of MAPK protein 1 (GAREM1) from Homo sapiens (Human).